The primary structure comprises 353 residues: DNA polymerase IV (353 aa).

The 185-residue stretch at 14–198 folds into the UmuC domain; the sequence is IIHIDMDAFF…MDISKFHGVG (185 aa). The Mg(2+) site is built by Asp-18 and Asp-116. Glu-117 is an active-site residue.

This sequence belongs to the DNA polymerase type-Y family. Monomer. The cofactor is Mg(2+).

The protein resides in the cytoplasm. The enzyme catalyses DNA(n) + a 2'-deoxyribonucleoside 5'-triphosphate = DNA(n+1) + diphosphate. Functionally, poorly processive, error-prone DNA polymerase involved in untargeted mutagenesis. Copies undamaged DNA at stalled replication forks, which arise in vivo from mismatched or misaligned primer ends. These misaligned primers can be extended by PolIV. Exhibits no 3'-5' exonuclease (proofreading) activity. May be involved in translesional synthesis, in conjunction with the beta clamp from PolIII. This is DNA polymerase IV from Streptococcus pneumoniae serotype 2 (strain D39 / NCTC 7466).